Reading from the N-terminus, the 129-residue chain is D-ribose pyranase (129 aa).

H20 serves as the catalytic Proton donor. Residues D28, H96, and 118–120 (YAN) contribute to the substrate site.

The protein belongs to the RbsD / FucU family. RbsD subfamily. As to quaternary structure, homodecamer.

Its subcellular location is the cytoplasm. It catalyses the reaction beta-D-ribopyranose = beta-D-ribofuranose. The protein operates within carbohydrate metabolism; D-ribose degradation; D-ribose 5-phosphate from beta-D-ribopyranose: step 1/2. Functionally, catalyzes the interconversion of beta-pyran and beta-furan forms of D-ribose. The polypeptide is D-ribose pyranase (Exiguobacterium sibiricum (strain DSM 17290 / CCUG 55495 / CIP 109462 / JCM 13490 / 255-15)).